The primary structure comprises 397 residues: G2/mitotic-specific cyclin-B1 (397 aa).

Residues 1–17 (MALRVTRNTRLASSENQ) show a composition bias toward polar residues. Positions 1–30 (MALRVTRNTRLASSENQGALPGKAAVANKP) are disordered.

Belongs to the cyclin family. Cyclin AB subfamily. Interacts with the CDK1 protein kinase to form a serine/threonine kinase holoenzyme complex also known as maturation promoting factor (MPF). The cyclin subunit imparts substrate specificity to the complex.

Its function is as follows. Essential for the control of the cell cycle at the G2/M (mitosis) transition. The protein is G2/mitotic-specific cyclin-B1 (ccnb1) of Carassius auratus (Goldfish).